The following is a 206-amino-acid chain: Ras-related protein RABG3a (206 aa).

15–22 contacts GTP; it reads GDSGVGKT. The short motif at 37-45 is the Effector region element; the sequence is YKATIGADF. Residues 63-67, 125-128, and 158-159 contribute to the GTP site; these read DTAGQ, NKID, and SA. 2 S-geranylgeranyl cysteine lipidation sites follow: Cys204 and Cys206. Cys206 carries the cysteine methyl ester modification.

Belongs to the small GTPase superfamily. Rab family.

Its subcellular location is the cell membrane. Functionally, intracellular vesicle trafficking and protein transport. The sequence is that of Ras-related protein RABG3a (RABG3A) from Arabidopsis thaliana (Mouse-ear cress).